A 186-amino-acid chain; its full sequence is Ribosome-recycling factor (186 aa).

It belongs to the RRF family.

Its subcellular location is the cytoplasm. Its function is as follows. Responsible for the release of ribosomes from messenger RNA at the termination of protein biosynthesis. May increase the efficiency of translation by recycling ribosomes from one round of translation to another. This is Ribosome-recycling factor from Bordetella parapertussis (strain 12822 / ATCC BAA-587 / NCTC 13253).